A 67-amino-acid polypeptide reads, in one-letter code: Small ribosomal subunit protein eS31 (67 aa).

Positions 35, 38, 54, and 57 each coordinate Zn(2+). A C4-type zinc finger spans residues 35–57 (CPRCGSIMAHHMKPLERWACGKC).

This sequence belongs to the eukaryotic ribosomal protein eS31 family. As to quaternary structure, part of the 30S ribosomal subunit. The cofactor is Zn(2+).

The sequence is that of Small ribosomal subunit protein eS31 from Sulfolobus acidocaldarius (strain ATCC 33909 / DSM 639 / JCM 8929 / NBRC 15157 / NCIMB 11770).